Here is a 490-residue protein sequence, read N- to C-terminus: Katanin p60 ATPase-containing subunit A-like 1 (490 aa).

An N-acetylmethionine modification is found at methionine 1. A disordered region spans residues 95–178; sequence DPAVWPPPVP…MQDGASDGDI (84 aa). Residues 116–127 show a composition bias toward basic and acidic residues; the sequence is PNREVRPLRKDV. Low complexity predominate over residues 128–139; sequence AGVGARGPVGRA. The span at 143-169 shows a compositional bias: basic and acidic residues; sequence SKSEKPSTNKDKDYRARGRDDKGRKNM. Serine 174 is modified (phosphoserine). 248 to 255 is a binding site for ATP; it reads GPPGTGKT.

It belongs to the AAA ATPase family. Katanin p60 subunit A1 subfamily. A-like 1 sub-subfamily. In terms of assembly, interacts with KATNB1 and KATNBL1.

It localises to the cytoplasm. Its subcellular location is the cytoskeleton. The protein resides in the spindle pole. It is found in the spindle. The catalysed reaction is n ATP + n H2O + a microtubule = n ADP + n phosphate + (n+1) alpha/beta tubulin heterodimers.. Its function is as follows. Regulates microtubule dynamics in Sertoli cells, a process that is essential for spermiogenesis and male fertility. Severs microtubules in an ATP-dependent manner, promoting rapid reorganization of cellular microtubule arrays. Has microtubule-severing activity in vitro. This Sorex araneus (Eurasian common shrew) protein is Katanin p60 ATPase-containing subunit A-like 1.